The following is a 151-amino-acid chain: Ribonuclease H (151 aa).

The 143-residue stretch at 1-143 folds into the RNase H type-1 domain; sequence MEEYVIYTDG…VDRVARKEAA (143 aa). Mg(2+) is bound by residues Asp9, Glu48, Asp71, and Asp135.

The protein belongs to the RNase H family. In terms of assembly, monomer. Mg(2+) serves as cofactor.

The protein localises to the cytoplasm. The catalysed reaction is Endonucleolytic cleavage to 5'-phosphomonoester.. Endonuclease that specifically degrades the RNA of RNA-DNA hybrids. This is Ribonuclease H from Neorickettsia sennetsu (strain ATCC VR-367 / Miyayama) (Ehrlichia sennetsu).